Consider the following 93-residue polypeptide: Cell division topological specificity factor (93 aa).

Belongs to the MinE family.

In terms of biological role, prevents the cell division inhibition by proteins MinC and MinD at internal division sites while permitting inhibition at polar sites. This ensures cell division at the proper site by restricting the formation of a division septum at the midpoint of the long axis of the cell. In Halorhodospira halophila (strain DSM 244 / SL1) (Ectothiorhodospira halophila (strain DSM 244 / SL1)), this protein is Cell division topological specificity factor.